Consider the following 343-residue polypeptide: Lumican (343 aa).

Positions 1-18 (MTLNSLPIFLVLISGIFC) are cleaved as a signal peptide. Glutamine 19 bears the Pyrrolidone carboxylic acid mark. Sulfotyrosine is present on residues tyrosine 20 and tyrosine 22. The 39-residue stretch at 31–69 (DPFGPSTAVCAPECNCPLSYPTAMYCDNLKLKTIPIVPS) folds into the LRRNT domain. LRR repeat units follow at residues 70-91 (GIKYLYLRNNMIESIEENTFDN), 94-117 (DLQWLILDHNHLENSKIKGRVFSK), 120-140 (NLKKLHINYNNLTEAVGPLPK), 141-162 (TLDDLQLSHNKITKVNPGALEG), 165-186 (NLTVIHLQNNQLKADSISGAFK), 190-211 (SLLYLDLSFNQLTKLPTGLPHS), 212-232 (LLMLYFDNNQISNIPDEYFQG), and 235-255 (TLQYLRLSHNKLTDSGIPGNV). The N-linked (GlcNAc...) (keratan sulfate) asparagine glycan is linked to asparagine 91. N-linked (GlcNAc...) (keratan sulfate) asparagine glycosylation is present at asparagine 130. A glycan (N-linked (GlcNAc...) (keratan sulfate) asparagine) is linked at asparagine 165. Asparagine 257 carries N-linked (GlcNAc...) (keratan sulfate) asparagine glycosylation. 3 LRR repeats span residues 260-281 (SLVELDLSFNQLKSIPTVSENL), 282-301 (ENFYLQVNKINKFPLSSFCK), and 310-330 (KITHLRLDGNNLTRADLPQEM). Cysteine 300 and cysteine 333 are oxidised to a cystine. The N-linked (GlcNAc...) asparagine glycan is linked to asparagine 320.

The protein belongs to the small leucine-rich proteoglycan (SLRP) family. SLRP class II subfamily. In terms of assembly, binds to laminin. Contains keratan sulfate.

Its subcellular location is the secreted. It is found in the extracellular space. It localises to the extracellular matrix. This chain is Lumican (LUM), found in Coturnix japonica (Japanese quail).